The primary structure comprises 203 residues: Somatotropin (203 aa).

Residues 1–17 form the signal peptide; sequence MDRVVLMLSVLSLGVSS. Glutamine 18 carries the post-translational modification Pyrrolidone carboxylic acid. Histidine 36 serves as a coordination point for Zn(2+). The cysteines at positions 68 and 176 are disulfide-linked. Glutamate 185 serves as a coordination point for Zn(2+). A disulfide bridge links cysteine 193 with cysteine 201.

The protein belongs to the somatotropin/prolactin family.

The protein localises to the secreted. Its function is as follows. Growth hormone plays an important role in growth control and is involved in the regulation of several anabolic processes. Implicated as an osmoregulatory substance important for seawater adaptation. This is Somatotropin (gh) from Pagrus major (Red sea bream).